Reading from the N-terminus, the 65-residue chain is Small, acid-soluble spore protein C3 (65 aa).

Belongs to the alpha/beta-type SASP family.

SASP are bound to spore DNA. They are double-stranded DNA-binding proteins that cause DNA to change to an a-like conformation. They protect the DNA backbone from chemical and enzymatic cleavage and are thus involved in dormant spore's high resistance to UV light. In Priestia megaterium (Bacillus megaterium), this protein is Small, acid-soluble spore protein C3 (SASP-C3).